The sequence spans 328 residues: Malate dehydrogenase (328 aa).

11-17 (GAAGQIG) provides a ligand contact to NAD(+). Substrate is bound by residues Arg-94 and Arg-100. NAD(+) is bound by residues Asn-107, Gln-114, and 131–133 (VGN). Substrate is bound by residues Asn-133 and Arg-164. His-189 acts as the Proton acceptor in catalysis.

The protein belongs to the LDH/MDH superfamily. MDH type 2 family.

It carries out the reaction (S)-malate + NAD(+) = oxaloacetate + NADH + H(+). In terms of biological role, catalyzes the reversible oxidation of malate to oxaloacetate. This is Malate dehydrogenase from Xanthomonas oryzae pv. oryzae (strain MAFF 311018).